The primary structure comprises 337 residues: Eukaryotic translation initiation factor 3 subunit H (337 aa).

The region spanning 21–153 (VQCDGLAVMK…LKAYRLTPQA (133 aa)) is the MPN domain.

This sequence belongs to the eIF-3 subunit H family. As to quaternary structure, component of the eukaryotic translation initiation factor 3 (eIF-3) complex.

Its subcellular location is the cytoplasm. Functionally, component of the eukaryotic translation initiation factor 3 (eIF-3) complex, which is involved in protein synthesis of a specialized repertoire of mRNAs and, together with other initiation factors, stimulates binding of mRNA and methionyl-tRNAi to the 40S ribosome. The eIF-3 complex specifically targets and initiates translation of a subset of mRNAs involved in cell proliferation. The polypeptide is Eukaryotic translation initiation factor 3 subunit H (Bombyx mori (Silk moth)).